A 59-amino-acid chain; its full sequence is Large ribosomal subunit protein bL32 (59 aa).

Residues 1–16 show a composition bias toward basic residues; it reads MAVPKRKVSPHRRGNR. The interval 1-20 is disordered; it reads MAVPKRKVSPHRRGNRRAHD.

It belongs to the bacterial ribosomal protein bL32 family.

This Erythrobacter litoralis (strain HTCC2594) protein is Large ribosomal subunit protein bL32.